Here is an 86-residue protein sequence, read N- to C-terminus: Neurotoxin 8-related gene product 1/2/3 (86 aa).

Positions 1 to 19 (MNYLTMISLALLVMTGVES) are cleaved as a signal peptide. In terms of domain architecture, LCN-type CS-alpha/beta spans 22-84 (RDAYIADNKN…VPIKVPGKCN (63 aa)). 4 disulfide bridges follow: Cys-32/Cys-83, Cys-36/Cys-56, Cys-42/Cys-66, and Cys-46/Cys-68. The residue at position 84 (Asn-84) is an Asparagine amide.

This sequence belongs to the long (4 C-C) scorpion toxin superfamily. Sodium channel inhibitor family. Alpha subfamily. Expressed by the venom gland.

It is found in the secreted. Binds voltage-dependently at site-3 of sodium channels (Nav) and inhibits the inactivation of the activated channels, thereby blocking neuronal transmission. This chain is Neurotoxin 8-related gene product 1/2/3 (NTVIIIrgp1), found in Androctonus mauritanicus mauritanicus (Scorpion).